The chain runs to 111 residues: Universal stress protein B (111 aa).

The next 2 helical transmembrane spans lie at 1-21 (MISTVALFWALCVVCIVNMAR) and 90-110 (FILTSALCGLVVVSLIALMIW).

This sequence belongs to the universal stress protein B family.

It localises to the cell inner membrane. The chain is Universal stress protein B from Escherichia coli O45:K1 (strain S88 / ExPEC).